The sequence spans 227 residues: Endo-1,4-beta-xylanase 11A (227 aa).

The first 36 residues, 1-36 (MVSASSLLLAASAIAGVFSAPAAAPVSENLNVLQER), serve as a signal peptide directing secretion. One can recognise a GH11 domain in the interval 37 to 227 (ALTSSATGTS…SSGSASITVS (191 aa)). Residues 112–136 (VYGWTTSPLIEYYIVEDFGTYDPSS) are necrosis inducing domain. Residue Glu122 is the Nucleophile of the active site. The Proton donor role is filled by Glu214.

The protein belongs to the glycosyl hydrolase 11 (cellulase G) family.

The protein localises to the secreted. The catalysed reaction is Endohydrolysis of (1-&gt;4)-beta-D-xylosidic linkages in xylans.. It functions in the pathway glycan degradation; xylan degradation. Significantly inhibited by the wheat xylanase inhibiting protein I (XIP-I) and the proteinaceous endoxylanase Triticum aestivum xylanase inhibitors I (TAXI-I), whereas no inhibition is detected with TAXI-II. In terms of biological role, endo-1,4-beta-xylanase involved in the hydrolysis of xylan, a major structural heterogeneous polysaccharide found in plant biomass representing the second most abundant polysaccharide in the biosphere, after cellulose. Required for plant infection and the appearance of secondary lesions. Is able to induce necrosis on leaves, seedling growth inhibition, induction of a ROS burst, electrolyte leakage, cytoplasm shrinkage, autofluorescence, cell death, and induction of defense genes, and this abilities are independent of the catalytic activity. Only exhibits elicitor activity in certain plants such as tomato, but not in N.benthamiana. The sequence is that of Endo-1,4-beta-xylanase 11A from Botryotinia fuckeliana (strain B05.10) (Noble rot fungus).